The sequence spans 508 residues: Rhamnogalacturonan I rhamnosyltransferase 1 (508 aa).

Residues 41 to 63 (LWMIRAVTVLLLWSCFVHLMALG) form a helical; Signal-anchor for type II membrane protein membrane-spanning segment. 3 N-linked (GlcNAc...) asparagine glycosylation sites follow: Asn-136, Asn-202, and Asn-223. 277-279 (HLR) serves as a coordination point for substrate. The N-linked (GlcNAc...) asparagine glycan is linked to Asn-391.

This sequence belongs to the glycosyltransferase GT106 family. In terms of tissue distribution, highly expressed in siliques. Expressed in stems and flowers. Expressed at low levels in roots and rosette leaves.

The protein resides in the golgi apparatus membrane. The enzyme catalyses alpha-D-galacturonosyl-[(1-&gt;2)-alpha-L-rhamnosyl-(1-&gt;4)-alpha-D-galacturonosyl](n) + UDP-beta-L-rhamnose = [(1-&gt;2)-alpha-L-rhamnosyl-(1-&gt;4)-alpha-D-galacturonosyl](n+1) + UDP + H(+). Its pathway is glycan metabolism; pectin biosynthesis. Its function is as follows. Glycosyltransferase involved in the formation of rhamnogalacturonan I (RG-I) oligosaccharides in the seed coat mucilage, which is a specialized cell wall with abundant RG-I. Transfers the rhamnose residue from UDP-beta-L-rhamnose to RG-I oligosaccharides. Prefers RG-I oligosaccharides with a degree of polymerization of 5 or larger than 5. Does not act on oligosaccharides with a degree of polymerization of 4 or smaller than 4. Does not require metal ions for its activity. The protein is Rhamnogalacturonan I rhamnosyltransferase 1 of Arabidopsis thaliana (Mouse-ear cress).